The sequence spans 374 residues: Alcohol dehydrogenase class-3 (374 aa).

At serine 2 the chain carries N-acetylserine. Residues cysteine 45, histidine 67, cysteine 97, cysteine 100, cysteine 103, cysteine 111, and cysteine 174 each contribute to the Zn(2+) site. An N6-succinyllysine modification is found at lysine 233. Residue serine 247 is modified to Phosphoserine. Lysine 315 carries the N6-succinyllysine modification. Phosphoserine is present on residues serine 324 and serine 351.

This sequence belongs to the zinc-containing alcohol dehydrogenase family. Class-III subfamily. In terms of assembly, homodimer. Zn(2+) serves as cofactor.

The protein localises to the cytoplasm. The catalysed reaction is a primary alcohol + NAD(+) = an aldehyde + NADH + H(+). It carries out the reaction a secondary alcohol + NAD(+) = a ketone + NADH + H(+). The enzyme catalyses S-(hydroxymethyl)glutathione + NADP(+) = S-formylglutathione + NADPH + H(+). It catalyses the reaction S-(hydroxymethyl)glutathione + NAD(+) = S-formylglutathione + NADH + H(+). The catalysed reaction is 20-oxo-(5Z,8Z,11Z,14Z)-eicosatetraenoate + NAD(+) + H2O = (5Z,8Z,11Z,14Z)-eicosatetraenedioate + NADH + 2 H(+). It carries out the reaction 20-hydroxy-(5Z,8Z,11Z,14Z)-eicosatetraenoate + NAD(+) = 20-oxo-(5Z,8Z,11Z,14Z)-eicosatetraenoate + NADH + H(+). The enzyme catalyses S-nitrosoglutathione + NADH + H(+) = S-(hydroxysulfenamide)glutathione + NAD(+). In terms of biological role, catalyzes the oxidation of long-chain primary alcohols and the oxidation of S-(hydroxymethyl) glutathione. Also oxidizes long chain omega-hydroxy fatty acids, such as 20-HETE, producing both the intermediate aldehyde, 20-oxoarachidonate and the end product, a dicarboxylic acid, (5Z,8Z,11Z,14Z)-eicosatetraenedioate. Class-III ADH is remarkably ineffective in oxidizing ethanol. Required for clearance of cellular formaldehyde, a cytotoxic and carcinogenic metabolite that induces DNA damage. Also acts as a S-nitroso-glutathione reductase by catalyzing the NADH-dependent reduction of S-nitrosoglutathione, thereby regulating protein S-nitrosylation. This is Alcohol dehydrogenase class-3 from Equus caballus (Horse).